The primary structure comprises 499 residues: BTB/POZ domain-containing protein At5g60050 (499 aa).

Residues 18 to 30 (PSLSFSPSRISSP) show a composition bias toward low complexity. Residues 18–57 (PSLSFSPSRISSPIKLSTASPPLPPPPPPPPNESTLSNPT) form a disordered region. Residues 38-49 (PPLPPPPPPPPN) show a composition bias toward pro residues. Residues 99–172 (GDVKLTVVGK…MYSDDLKKKL (74 aa)) form the BTB domain.

The protein operates within protein modification; protein ubiquitination. May act as a substrate-specific adapter of an E3 ubiquitin-protein ligase complex (CUL3-RBX1-BTB) which mediates the ubiquitination and subsequent proteasomal degradation of target proteins. This is BTB/POZ domain-containing protein At5g60050 from Arabidopsis thaliana (Mouse-ear cress).